The sequence spans 209 residues: CASP-like protein 1A1 (209 aa).

Positions methionine 1–glycine 26 are disordered. Residues methionine 1–serine 49 lie on the Cytoplasmic side of the membrane. A helical membrane pass occupies residues valine 50–methionine 70. Residues glycine 71–threonine 95 are Extracellular-facing. Residues leucine 96–valine 116 form a helical membrane-spanning segment. Residues serine 117–arginine 130 are Cytoplasmic-facing. A helical membrane pass occupies residues isoleucine 131–alanine 151. Residues threonine 152–glycine 183 lie on the Extracellular side of the membrane. Residue asparagine 162 is glycosylated (N-linked (GlcNAc...) asparagine). Residues serine 184 to isoleucine 204 form a helical membrane-spanning segment. At serine 205–histidine 209 the chain is on the cytoplasmic side.

This sequence belongs to the Casparian strip membrane proteins (CASP) family. As to quaternary structure, homodimer and heterodimers. In terms of tissue distribution, expressed in the root endodermis.

The protein resides in the cell membrane. The polypeptide is CASP-like protein 1A1 (Arabidopsis thaliana (Mouse-ear cress)).